A 374-amino-acid polypeptide reads, in one-letter code: Queuine tRNA-ribosyltransferase (374 aa).

Asp-95 functions as the Proton acceptor in the catalytic mechanism. Residues 95–99 (DSGGF), Asp-149, Gln-191, and Gly-218 contribute to the substrate site. Residues 249–255 (GVGTYRE) are RNA binding. Asp-268 functions as the Nucleophile in the catalytic mechanism. The RNA binding; important for wobble base 34 recognition stretch occupies residues 273 to 277 (TRWAR). Zn(2+)-binding residues include Cys-306, Cys-308, Cys-311, and His-337.

It belongs to the queuine tRNA-ribosyltransferase family. As to quaternary structure, homodimer. Within each dimer, one monomer is responsible for RNA recognition and catalysis, while the other monomer binds to the replacement base PreQ1. It depends on Zn(2+) as a cofactor.

It catalyses the reaction 7-aminomethyl-7-carbaguanine + guanosine(34) in tRNA = 7-aminomethyl-7-carbaguanosine(34) in tRNA + guanine. It functions in the pathway tRNA modification; tRNA-queuosine biosynthesis. Its function is as follows. Catalyzes the base-exchange of a guanine (G) residue with the queuine precursor 7-aminomethyl-7-deazaguanine (PreQ1) at position 34 (anticodon wobble position) in tRNAs with GU(N) anticodons (tRNA-Asp, -Asn, -His and -Tyr). Catalysis occurs through a double-displacement mechanism. The nucleophile active site attacks the C1' of nucleotide 34 to detach the guanine base from the RNA, forming a covalent enzyme-RNA intermediate. The proton acceptor active site deprotonates the incoming PreQ1, allowing a nucleophilic attack on the C1' of the ribose to form the product. After dissociation, two additional enzymatic reactions on the tRNA convert PreQ1 to queuine (Q), resulting in the hypermodified nucleoside queuosine (7-(((4,5-cis-dihydroxy-2-cyclopenten-1-yl)amino)methyl)-7-deazaguanosine). This chain is Queuine tRNA-ribosyltransferase, found in Nostoc sp. (strain PCC 7120 / SAG 25.82 / UTEX 2576).